The chain runs to 126 residues: MAKYTNDELLEAFGEMTLVELSEFVKAFEEKFDVEAAAPVAAVAAAPAAGAAAEEEKDEFDVILSAVGDKKIQVIKAVRAITNLGLAEAKALVDGAPKAVLEKAKKEDAEKAKSQLEEAGATVELK.

Over residues 107-116 (EDAEKAKSQL) the composition is skewed to basic and acidic residues. The disordered stretch occupies residues 107–126 (EDAEKAKSQLEEAGATVELK).

This sequence belongs to the bacterial ribosomal protein bL12 family. In terms of assembly, homodimer. Part of the ribosomal stalk of the 50S ribosomal subunit. Forms a multimeric L10(L12)X complex, where L10 forms an elongated spine to which 2 to 4 L12 dimers bind in a sequential fashion. Binds GTP-bound translation factors.

Its function is as follows. Forms part of the ribosomal stalk which helps the ribosome interact with GTP-bound translation factors. Is thus essential for accurate translation. This chain is Large ribosomal subunit protein bL12, found in Bifidobacterium adolescentis (strain ATCC 15703 / DSM 20083 / NCTC 11814 / E194a).